Here is an 87-residue protein sequence, read N- to C-terminus: Elongation factor Ts, chloroplastic (87 aa).

This sequence belongs to the EF-Ts family.

It localises to the plastid. It is found in the chloroplast. Its function is as follows. Associates with the EF-Tu.GDP complex and induces the exchange of GDP to GTP. It remains bound to the aminoacyl-tRNA.EF-Tu.GTP complex up to the GTP hydrolysis stage on the ribosome. The chain is Elongation factor Ts, chloroplastic (tsf) from Antithamnion sp. (Red alga).